A 380-amino-acid polypeptide reads, in one-letter code: Putative ankyrin repeat protein RF_1306 (380 aa).

ANK repeat units lie at residues 48-76, 80-109, 112-143, 170-199, 203-233, 239-268, 270-299, 303-333, and 337-366; these read NKWSDLHIAVGAKELKLVKALCNEKNINA, KCRTPLELAILGNDLETVKFLVQMGGKIAP, YGWSAIHLAIKIDNVEMVEYLYENTEFQKYDK, NNKTPLELAVESKNISSVKALIIKGAKFDI, LGYKIFELAIDSEDMKLIEYLVNHTLVGKNT, LEKVAQIYDKNINLSKLVKVLIKDNAGFDK, LGQKLLQKAIYADDLELVETLYSKGVDAQY, LGRSGLHHAIKANCGEELIQFLIEHTTDINY, and SGLNPLGLAKSNNCTVATKLLLEAGAYESY.

This is Putative ankyrin repeat protein RF_1306 from Rickettsia felis (strain ATCC VR-1525 / URRWXCal2) (Rickettsia azadi).